Here is a 190-residue protein sequence, read N- to C-terminus: Elongation factor P (190 aa).

Belongs to the elongation factor P family.

It localises to the cytoplasm. The protein operates within protein biosynthesis; polypeptide chain elongation. Functionally, involved in peptide bond synthesis. Stimulates efficient translation and peptide-bond synthesis on native or reconstituted 70S ribosomes in vitro. Probably functions indirectly by altering the affinity of the ribosome for aminoacyl-tRNA, thus increasing their reactivity as acceptors for peptidyl transferase. In Mycoplasma genitalium (strain ATCC 33530 / DSM 19775 / NCTC 10195 / G37) (Mycoplasmoides genitalium), this protein is Elongation factor P (efp).